We begin with the raw amino-acid sequence, 830 residues long: Vacuolar protein sorting-associated protein 11 homolog (830 aa).

An RING-type; atypical zinc finger spans residues 733–775; the sequence is CDICREMLSMQSIYFLCQHSFHEECLNYKSTKRQEKFLCIICK.

The protein belongs to the VPS11 family. In terms of assembly, part of the homotypic fusion and vacuole protein sorting (HOPS) complex, composed of Vps16A, car/Vps33A, dor/Vps18, Vps39, Vps11 and lt/Vps41. Unlike in other species, not part of the class C core vacuole/endosome tethering (CORVET) complex.

It is found in the late endosome membrane. The protein resides in the lysosome membrane. Its function is as follows. Part of the homotypic fusion and vacuole protein sorting (HOPS) tethering complex involved in endo-lysosomal vesicle trafficking and lysosome biogenesis, but unlike in many other species does not form part of the class C core vacuole/endosome tethering (CORVET) complex. The HOPS complex facilitates docking and fusion of lysosomes with late endosomes and several other types of vesicles. The HOPS complex is also involved in autophagy, pigment granule biogenesis and crinophagy (the elimination of unused secretory granules through fusion with lysosomes). The HOPS complex probably instigates autophagosome-lysosome fusion by binding autophagosome-associated Syx17/syntaxin 17 and promoting assembly of the trans-SNARE complex. Independent of Syx17/syntaxin 17, HOPS is involved in biosynthetic transport to lysosomes and lysosome-related organelles such as eye-pigment granules. Required for autophagocytosis-dependent remodeling of myofibrils and transverse-tubules (T-tubules) during metamorphosis. The polypeptide is Vacuolar protein sorting-associated protein 11 homolog (Drosophila melanogaster (Fruit fly)).